We begin with the raw amino-acid sequence, 784 residues long: Lon protease (784 aa).

The region spanning 11–204 (IPVLPLRDVV…YLMAMMESEI (194 aa)) is the Lon N-terminal domain. Position 356 to 363 (356 to 363 (GPPGVGKT)) interacts with ATP. Residues 592–773 (ENRVGQVTGL…EEVLALALQN (182 aa)) form the Lon proteolytic domain. Residues serine 679 and lysine 722 contribute to the active site.

Belongs to the peptidase S16 family. In terms of assembly, homohexamer. Organized in a ring with a central cavity.

The protein resides in the cytoplasm. The enzyme catalyses Hydrolysis of proteins in presence of ATP.. Its function is as follows. ATP-dependent serine protease that mediates the selective degradation of mutant and abnormal proteins as well as certain short-lived regulatory proteins. Required for cellular homeostasis and for survival from DNA damage and developmental changes induced by stress. Degrades polypeptides processively to yield small peptide fragments that are 5 to 10 amino acids long. Binds to DNA in a double-stranded, site-specific manner. The chain is Lon protease from Erwinia amylovora (Fire blight bacteria).